Here is a 442-residue protein sequence, read N- to C-terminus: Probable diguanylate cyclase DgcI (442 aa).

The signal sequence occupies residues 1-23 (MSRINKFVLTVSLLIFIMISAVA). Cys-24 is lipidated: N-palmitoyl cysteine. Cys-24 carries S-diacylglycerol cysteine lipidation. The chain crosses the membrane as a helical span at residues 231-251 (LIIFFAALVAVISGASCLYLV). Residues 319-442 (KGGYLCLFDV…KNGRAQISWQ (124 aa)) enclose the GGDEF domain. Residue Asp-327 participates in Mg(2+) binding. Substrate-binding residues include Asn-335, His-340, and Asp-344. Asp-371 is a binding site for Mg(2+).

In terms of assembly, homodimer. Requires Mg(2+) as cofactor.

The protein localises to the cell membrane. It carries out the reaction 2 GTP = 3',3'-c-di-GMP + 2 diphosphate. Its pathway is purine metabolism; 3',5'-cyclic di-GMP biosynthesis. Its function is as follows. Catalyzes the synthesis of cyclic-di-GMP (c-di-GMP) via the condensation of 2 GTP molecules. The chain is Probable diguanylate cyclase DgcI from Escherichia coli (strain K12).